The sequence spans 2027 residues: Mediator of RNA polymerase II transcription subunit 12 (2027 aa).

Position 13 is a phosphotyrosine (Tyr-13). Disordered regions lie at residues 170–191 (QSTSTLPTTPAPQPPTSSTPST), 474–516 (GAPG…MDID), 538–563 (MPCEGKGSPSPEKPDVEKEVKPPPKE), and 1088–1113 (TVTGGTEELPEEEGGGGSGGRRQGGR). 4 positions are modified to phosphoserine: Ser-482, Ser-512, Ser-545, and Ser-547. A compositionally biased stretch (basic and acidic residues) spans 549–563 (EKPDVEKEVKPPPKE). Ser-1105 and Ser-1116 each carry phosphoserine. Low complexity predominate over residues 1241-1258 (AETGSSSGSTASNMPSSS). Disordered stretches follow at residues 1241–1262 (AETGSSSGSTASNMPSSSKTKP), 1297–1321 (ELEKGQHLGSSSRKERDRQKQKSMS), and 1585–1676 (YLEP…PGSI). 2 stretches are compositionally biased toward basic and acidic residues: residues 1297-1316 (ELEKGQHLGSSSRKERDRQK) and 1605-1618 (EPEKKAPEPPKTDK). The segment at 1463-1901 (LAKKLQKELG…VRSTAILPEQ (439 aa)) is interaction with CTNNB1 and GLI3. Positions 1631–1640 (KKSTKGKKRS) are enriched in basic residues. Lys-1645 is subject to N6-acetyllysine. An Asymmetric dimethylarginine; alternate modification is found at Arg-1746. Residue Arg-1746 is modified to Omega-N-methylarginine; alternate. Arg-1757 is subject to Omega-N-methylarginine. The segment at 1805–1848 (QHTGPAGTMVPPSYSSQPYQSTHPSTNPTLVDPTRHLQQRPSGY) is disordered. Over residues 1815–1830 (PPSYSSQPYQSTHPST) the composition is skewed to low complexity. 2 positions are modified to asymmetric dimethylarginine: Arg-1844 and Arg-1865. 3 stretches are compositionally biased toward low complexity: residues 1965–1975 (QHQQQQQQQAA), 1983–1999 (SQPQFQRQGLQQTQQQQ), and 2008–2021 (LQQQLSNTQPQPST). Disordered regions lie at residues 1965-1999 (QHQQQQQQQAAPPQPQPQSQPQFQRQGLQQTQQQQ) and 2008-2027 (LQQQLSNTQPQPSTNIFGRY).

The protein belongs to the Mediator complex subunit 12 family. Component of the Mediator complex, which is composed of MED1, MED4, MED6, MED7, MED8, MED9, MED10, MED11, MED12, MED13, MED13L, MED14, MED15, MED16, MED17, MED18, MED19, MED20, MED21, MED22, MED23, MED24, MED25, MED26, MED27, MED29, MED30, MED31, CCNC, CDK8 and CDC2L6/CDK11. The MED12, MED13, CCNC and CDK8 subunits form a distinct module termed the CDK8 module. Mediator containing the CDK8 module is less active than Mediator lacking this module in supporting transcriptional activation. Individual preparations of the Mediator complex lacking one or more distinct subunits have been variously termed ARC, CRSP, DRIP, PC2, SMCC and TRAP. Also interacts with CTNNB1 and GLI3.

The protein resides in the nucleus. Functionally, component of the Mediator complex, a coactivator involved in the regulated transcription of nearly all RNA polymerase II-dependent genes. Mediator functions as a bridge to convey information from gene-specific regulatory proteins to the basal RNA polymerase II transcription machinery. Mediator is recruited to promoters by direct interactions with regulatory proteins and serves as a scaffold for the assembly of a functional preinitiation complex with RNA polymerase II and the general transcription factors. This subunit may specifically regulate transcription of targets of the Wnt signaling pathway and SHH signaling pathway. This chain is Mediator of RNA polymerase II transcription subunit 12 (MED12), found in Pan troglodytes (Chimpanzee).